The primary structure comprises 556 residues: 2-isopropylmalate synthase (556 aa).

One can recognise a Pyruvate carboxyltransferase domain in the interval 33-307 (PIWCSSDLRD…DPELDFSDID (275 aa)). Mg(2+)-binding residues include Asp42, His246, His248, and Asn282. The interval 439–556 (ANTPYALISH…SLSQTQAKAA (118 aa)) is regulatory domain.

It belongs to the alpha-IPM synthase/homocitrate synthase family. LeuA type 2 subfamily. In terms of assembly, homodimer. The cofactor is Mg(2+).

Its subcellular location is the cytoplasm. It catalyses the reaction 3-methyl-2-oxobutanoate + acetyl-CoA + H2O = (2S)-2-isopropylmalate + CoA + H(+). It functions in the pathway amino-acid biosynthesis; L-leucine biosynthesis; L-leucine from 3-methyl-2-oxobutanoate: step 1/4. Functionally, catalyzes the condensation of the acetyl group of acetyl-CoA with 3-methyl-2-oxobutanoate (2-ketoisovalerate) to form 3-carboxy-3-hydroxy-4-methylpentanoate (2-isopropylmalate). This chain is 2-isopropylmalate synthase, found in Pseudomonas savastanoi pv. phaseolicola (strain 1448A / Race 6) (Pseudomonas syringae pv. phaseolicola (strain 1448A / Race 6)).